Here is a 77-residue protein sequence, read N- to C-terminus: MHHVYVIECSDGTYYTGYTTDVQRRVAEHNAGDGAKYTRGRTPVTLRHTESFDSKSEAMRREYRIKQLSRAQKEALF.

The 75-residue stretch at 1–75 (MHHVYVIECS…KQLSRAQKEA (75 aa)) folds into the GIY-YIG domain.

Belongs to the UPF0213 family.

The chain is UPF0213 protein VNG_2274C from Halobacterium salinarum (strain ATCC 700922 / JCM 11081 / NRC-1) (Halobacterium halobium).